A 104-amino-acid polypeptide reads, in one-letter code: Disrupted in renal carcinoma protein 1 (104 aa).

Residues 1–23 (MPEAHMQPAKLQTSLPTTDHGSK) are disordered. Positions 10-19 (KLQTSLPTTD) are enriched in polar residues.

As to expression, expressed at low steady-state level in adult placenta, testis, ovary, prostate, fetal kidney, spleen and skeletal muscle.

The chain is Disrupted in renal carcinoma protein 1 (DIRC1) from Homo sapiens (Human).